We begin with the raw amino-acid sequence, 62 residues long: MSCFPVLFVMMLLASQSVWAFPEPETRIGTARDAESMGVRSAVEECCENPVCKHTSGCPTTG.

Residues 1–21 (MSCFPVLFVMMLLASQSVWAF) form the signal peptide. A propeptide spanning residues 22-40 (PEPETRIGTARDAESMGVR) is cleaved from the precursor.

The protein belongs to the teretoxin A (TA) superfamily. In terms of processing, contains 2 disulfide bonds. In terms of tissue distribution, expressed by the venom duct.

Its subcellular location is the secreted. The sequence is that of Teretoxin Tsu1.1 from Terebra subulata (Chocolate spotted auger).